A 339-amino-acid chain; its full sequence is DNA-directed RNA polymerase subunit alpha (339 aa).

An alpha N-terminal domain (alpha-NTD) region spans residues 1 to 234 (MIEKNWQELI…DQFQIFINFE (234 aa)). Residues 251-339 (FNPALLRKVD…DLAKRFEDHV (89 aa)) are alpha C-terminal domain (alpha-CTD).

This sequence belongs to the RNA polymerase alpha chain family. Homodimer. The RNAP catalytic core consists of 2 alpha, 1 beta, 1 beta' and 1 omega subunit. When a sigma factor is associated with the core the holoenzyme is formed, which can initiate transcription.

It catalyses the reaction RNA(n) + a ribonucleoside 5'-triphosphate = RNA(n+1) + diphosphate. In terms of biological role, DNA-dependent RNA polymerase catalyzes the transcription of DNA into RNA using the four ribonucleoside triphosphates as substrates. In Maricaulis maris (strain MCS10) (Caulobacter maris), this protein is DNA-directed RNA polymerase subunit alpha.